Reading from the N-terminus, the 573-residue chain is Isocitrate dehydrogenase kinase/phosphatase (573 aa).

ATP-binding positions include 318 to 324 and Lys-339; that span reads APGVRGM. Residue Asp-374 is part of the active site.

It belongs to the AceK family.

The protein resides in the cytoplasm. It catalyses the reaction L-seryl-[isocitrate dehydrogenase] + ATP = O-phospho-L-seryl-[isocitrate dehydrogenase] + ADP + H(+). In terms of biological role, bifunctional enzyme which can phosphorylate or dephosphorylate isocitrate dehydrogenase (IDH) on a specific serine residue. This is a regulatory mechanism which enables bacteria to bypass the Krebs cycle via the glyoxylate shunt in response to the source of carbon. When bacteria are grown on glucose, IDH is fully active and unphosphorylated, but when grown on acetate or ethanol, the activity of IDH declines drastically concomitant with its phosphorylation. The sequence is that of Isocitrate dehydrogenase kinase/phosphatase from Stutzerimonas stutzeri (strain A1501) (Pseudomonas stutzeri).